The primary structure comprises 274 residues: Rhamnulose-1-phosphate aldolase (274 aa).

Glu-117 is a catalytic residue. Zn(2+) is bound by residues His-141, His-143, and His-212.

It belongs to the aldolase class II family. RhaD subfamily. As to quaternary structure, homotetramer. Zn(2+) is required as a cofactor.

The protein localises to the cytoplasm. The enzyme catalyses L-rhamnulose 1-phosphate = (S)-lactaldehyde + dihydroxyacetone phosphate. It participates in carbohydrate degradation; L-rhamnose degradation; glycerone phosphate from L-rhamnose: step 3/3. Functionally, catalyzes the reversible cleavage of L-rhamnulose-1-phosphate to dihydroxyacetone phosphate (DHAP) and L-lactaldehyde. The chain is Rhamnulose-1-phosphate aldolase from Escherichia coli O157:H7.